A 261-amino-acid chain; its full sequence is Phosphonates import ATP-binding protein PhnC (261 aa).

Residues 8–253 (LRVENLSKTY…WFRRIYGEGA (246 aa)) form the ABC transporter domain. 41-48 (GLSGSGKS) is an ATP binding site.

It belongs to the ABC transporter superfamily. Phosphonates importer (TC 3.A.1.9.1) family. As to quaternary structure, the complex is composed of two ATP-binding proteins (PhnC), two transmembrane proteins (PhnE) and a solute-binding protein (PhnD).

Its subcellular location is the cell inner membrane. The enzyme catalyses phosphonate(out) + ATP + H2O = phosphonate(in) + ADP + phosphate + H(+). Part of the ABC transporter complex PhnCDE involved in phosphonates import. Responsible for energy coupling to the transport system. This Bdellovibrio bacteriovorus (strain ATCC 15356 / DSM 50701 / NCIMB 9529 / HD100) protein is Phosphonates import ATP-binding protein PhnC.